We begin with the raw amino-acid sequence, 90 residues long: RNA-binding protein Hfq (90 aa).

In terms of domain architecture, Sm spans 9–68 (EPFLNTLRKEKVPVSIYLVNGIKLQGQIESFDQFVVLLRNNVNQMVYKHAISTIVPARRV).

This sequence belongs to the Hfq family. As to quaternary structure, homohexamer.

RNA chaperone that binds small regulatory RNA (sRNAs) and mRNAs to facilitate mRNA translational regulation in response to envelope stress, environmental stress and changes in metabolite concentrations. Also binds with high specificity to tRNAs. The sequence is that of RNA-binding protein Hfq from Halorhodospira halophila (strain DSM 244 / SL1) (Ectothiorhodospira halophila (strain DSM 244 / SL1)).